Here is a 337-residue protein sequence, read N- to C-terminus: Anthranilate phosphoribosyltransferase (337 aa).

5-phospho-alpha-D-ribose 1-diphosphate is bound by residues Gly81, 84-85, Thr89, 91-94, 109-117, and Thr121; these read GD, NIST, and KHGNRALSS. Gly81 is a binding site for anthranilate. Ser93 provides a ligand contact to Mg(2+). Residue Asn112 participates in anthranilate binding. Residue Arg167 participates in anthranilate binding. Mg(2+) contacts are provided by Asp225 and Glu226.

It belongs to the anthranilate phosphoribosyltransferase family. As to quaternary structure, homodimer. It depends on Mg(2+) as a cofactor.

It carries out the reaction N-(5-phospho-beta-D-ribosyl)anthranilate + diphosphate = 5-phospho-alpha-D-ribose 1-diphosphate + anthranilate. It participates in amino-acid biosynthesis; L-tryptophan biosynthesis; L-tryptophan from chorismate: step 2/5. In terms of biological role, catalyzes the transfer of the phosphoribosyl group of 5-phosphorylribose-1-pyrophosphate (PRPP) to anthranilate to yield N-(5'-phosphoribosyl)-anthranilate (PRA). This Sinorhizobium medicae (strain WSM419) (Ensifer medicae) protein is Anthranilate phosphoribosyltransferase.